The chain runs to 337 residues: MKKILFVVATIFMALFLNAKENDMRNLKDIYLAGGCFWGTQAYFDKIRGVIKTDVGYANGKSDKTDYHSLHYSGHAETVHITFDENIVSLAEILAHYFRIIDPFSVNKQGNDVGSQYRTGIYYNDSSLKNSISEFIKHEQTKYDKKIAVEVEPLKNYVLAEDYHQKYLDKNPGGYCHVDLSLADKPLYNESKFKAPSKDELKAKLSDLQYSVTQEKATERPYSSEYDKFDKKGIYVDIVSKKPLFSSSDKFDAGCGWPSFTKPITTDALGYNRDLSHGMERVEVTSNLANSHLGHVFTDGPKDKGGLRYCINGASLKFIPLEDMEKEGYKDYIIYVK.

Residues 28-181 form a peptide methionine sulfoxide reductase A region; the sequence is KDIYLAGGCF…PGGYCHVDLS (154 aa). Cysteine 36 is a catalytic residue. Residues 198-321 enclose the MsrB domain; that stretch reads KDELKAKLSD…NGASLKFIPL (124 aa). The active-site Nucleophile is the cysteine 310.

The protein in the N-terminal section; belongs to the MsrA Met sulfoxide reductase family. This sequence in the C-terminal section; belongs to the MsrB Met sulfoxide reductase family.

The catalysed reaction is L-methionyl-[protein] + [thioredoxin]-disulfide + H2O = L-methionyl-(S)-S-oxide-[protein] + [thioredoxin]-dithiol. The enzyme catalyses [thioredoxin]-disulfide + L-methionine + H2O = L-methionine (S)-S-oxide + [thioredoxin]-dithiol. It carries out the reaction L-methionyl-[protein] + [thioredoxin]-disulfide + H2O = L-methionyl-(R)-S-oxide-[protein] + [thioredoxin]-dithiol. Functionally, has an important function as a repair enzyme for proteins that have been inactivated by oxidation. Catalyzes the reversible oxidation-reduction of methionine sulfoxide in proteins to methionine. The sequence is that of Peptide methionine sulfoxide reductase MsrA/MsrB (msrAB) from Campylobacter fetus.